Consider the following 550-residue polypeptide: MFCVQCEQTIRTPAGNGCSYAQGMCGKTAETSDLQDLLIAALQGLSAWAVKAREYGIINHDVDSFAPRAFFSTLTNVNFDSPRIVGYAREAIALREALKAQCLAVDANARVDNPMADLQLVSDDLGELQRQAAEFTPNKDKAAIGENILGLRLLCLYGLKGAAAYMEHAHVLGQYDNDIYAQYHKIMAWLGTWPADMNALLECSMEIGQMNFKVMSILDAGETGKYGHPTPTQVNVKATAGKCILISGHDLKDLYNLLEQTEGTGVNVYTHGEMLPAHGYPELRKFKHLVGNYGSGWQNQQVEFARFPGPIVMTSNCIIDPTVGAYDDRIWTRSIVGWPGVRHLDGEDFSAVIAQAQQMAGFPYSEIPHLITVGFGRQTLLGAADTLIDLVSREKLRHIFLLGGCDGARGERHYFTDFATSVPDDCLILTLACGKYRFNKLEFGDIEGLPRLVDAGQCNDAYSAIILAVTLAEKLGCGVNDLPLSLVLSWFEQKAIVILLTLLSLGVKNIVTGPTAPGFLTPDLLAVLNEKFGLRSITTVEEDMKQLLNA.

Positions 3, 6, 18, and 25 each coordinate [2Fe-2S] cluster. Residues histidine 249, glutamate 273, cysteine 317, cysteine 405, cysteine 433, cysteine 458, glutamate 492, and lysine 494 each coordinate hybrid [4Fe-2O-2S] cluster. At cysteine 405 the chain carries Cysteine persulfide.

It belongs to the HCP family. It depends on [2Fe-2S] cluster as a cofactor. Requires hybrid [4Fe-2O-2S] cluster as cofactor.

The protein resides in the cytoplasm. It carries out the reaction A + NH4(+) + H2O = hydroxylamine + AH2 + H(+). In terms of biological role, catalyzes the reduction of hydroxylamine to form NH(3) and H(2)O. The chain is Hydroxylamine reductase from Shigella flexneri serotype 5b (strain 8401).